The chain runs to 159 residues: MISRVVLTTYVYPTEDEEKVRKAVGNLFDLEMFEEREEEMGDLRRLEFVCEGPQARLSLGRIYELLREQEILDAARRVLREGVTAEGSILFHLNKQAAFAGSVSFAEGGESPLGPIVVEVFPERPEDVEKVIDWLAPETIDGKPIYEVKKPRLREEELE.

Belongs to the UPF0201 family.

In Methanopyrus kandleri (strain AV19 / DSM 6324 / JCM 9639 / NBRC 100938), this protein is UPF0201 protein MK0399.